A 380-amino-acid polypeptide reads, in one-letter code: Tetraacyldisaccharide 4'-kinase (380 aa).

51–58 is an ATP binding site; that stretch reads SVGGTGKT.

The protein belongs to the LpxK family.

It carries out the reaction a lipid A disaccharide + ATP = a lipid IVA + ADP + H(+). It participates in glycolipid biosynthesis; lipid IV(A) biosynthesis; lipid IV(A) from (3R)-3-hydroxytetradecanoyl-[acyl-carrier-protein] and UDP-N-acetyl-alpha-D-glucosamine: step 6/6. Its function is as follows. Transfers the gamma-phosphate of ATP to the 4'-position of a tetraacyldisaccharide 1-phosphate intermediate (termed DS-1-P) to form tetraacyldisaccharide 1,4'-bis-phosphate (lipid IVA). The sequence is that of Tetraacyldisaccharide 4'-kinase from Bacteroides thetaiotaomicron (strain ATCC 29148 / DSM 2079 / JCM 5827 / CCUG 10774 / NCTC 10582 / VPI-5482 / E50).